The chain runs to 256 residues: Ribosomal RNA large subunit methyltransferase E (256 aa).

Positions 48, 50, 68, 86, and 111 each coordinate S-adenosyl-L-methionine. The active-site Proton acceptor is lysine 151. Residues 198 to 256 enclose the TRAM domain; the sequence is PVSPGDELDATVVDIGSEGDGIIKIDGYTLFVPGVENGDSVRVRVTDLKSNVGFAEVIE.

The protein belongs to the class I-like SAM-binding methyltransferase superfamily. RNA methyltransferase RlmE family.

It is found in the cytoplasm. It carries out the reaction uridine(2552) in 23S rRNA + S-adenosyl-L-methionine = 2'-O-methyluridine(2552) in 23S rRNA + S-adenosyl-L-homocysteine + H(+). Specifically methylates the uridine in position 2552 of 23S rRNA at the 2'-O position of the ribose in the fully assembled 50S ribosomal subunit. The polypeptide is Ribosomal RNA large subunit methyltransferase E (Haloquadratum walsbyi (strain DSM 16790 / HBSQ001)).